Consider the following 239-residue polypeptide: Pyridoxine 5'-phosphate synthase (239 aa).

N7 is a 3-amino-2-oxopropyl phosphate binding site. 9 to 10 (DH) contributes to the 1-deoxy-D-xylulose 5-phosphate binding site. R18 lines the 3-amino-2-oxopropyl phosphate pocket. H43 (proton acceptor) is an active-site residue. 1-deoxy-D-xylulose 5-phosphate contacts are provided by R45 and H50. E70 (proton acceptor) is an active-site residue. T100 lines the 1-deoxy-D-xylulose 5-phosphate pocket. H191 functions as the Proton donor in the catalytic mechanism. Residues G192 and 213–214 (GH) contribute to the 3-amino-2-oxopropyl phosphate site.

It belongs to the PNP synthase family. As to quaternary structure, homooctamer; tetramer of dimers.

The protein localises to the cytoplasm. It carries out the reaction 3-amino-2-oxopropyl phosphate + 1-deoxy-D-xylulose 5-phosphate = pyridoxine 5'-phosphate + phosphate + 2 H2O + H(+). It participates in cofactor biosynthesis; pyridoxine 5'-phosphate biosynthesis; pyridoxine 5'-phosphate from D-erythrose 4-phosphate: step 5/5. Its function is as follows. Catalyzes the complicated ring closure reaction between the two acyclic compounds 1-deoxy-D-xylulose-5-phosphate (DXP) and 3-amino-2-oxopropyl phosphate (1-amino-acetone-3-phosphate or AAP) to form pyridoxine 5'-phosphate (PNP) and inorganic phosphate. In Desulforapulum autotrophicum (strain ATCC 43914 / DSM 3382 / VKM B-1955 / HRM2) (Desulfobacterium autotrophicum), this protein is Pyridoxine 5'-phosphate synthase.